The sequence spans 326 residues: ELAV-like protein 1 (326 aa).

Residue Ser-2 is modified to N-acetylserine. Position 2 is a phosphoserine (Ser-2). One can recognise an RRM 1 domain in the interval Thr-20–Pro-98. Ser-100 and Ser-158 each carry phosphoserine. The region spanning Ala-106–Asn-186 is the RRM 2 domain. A Glycyl lysine isopeptide (Lys-Gly) (interchain with G-Cter in SUMO2) cross-link involves residue Lys-191. A phosphoserine mark is found at Ser-197 and Ser-202. Arg-206 is subject to Omega-N-methylarginine. At Arg-217 the chain carries Asymmetric dimethylarginine; by CARM1; alternate. Arg-217 is subject to Omega-N-methylarginine; alternate. Ser-221 and Ser-318 each carry phosphoserine. The 79-residue stretch at Trp-244–Asn-322 folds into the RRM 3 domain.

This sequence belongs to the RRM elav family. Monomer and homodimer (in vitro). Interacts with ANP32A. Interacts with ZNF385A; the interaction is indirect and mRNA-dependent and may regulate p53/TP53 expression. Identified in a mRNP complex, at least composed of DHX9, DDX3X, ELAVL1, HNRNPU, IGF2BP1, ILF3, PABPC1, PCBP2, PTBP2, STAU1, STAU2, SYNCRIP and YBX1. Interacts with AGO1 and AGO2. Interacts with IGF2BP1. Interacts with IGF2BP2 and IGF2BP3. Interacts with HNRNPL. Interacts with DHX36; this interaction occurs in a RNA-dependent manner. Interacts with ILF3; this interaction occurs in a RNA-dependent manner. Interacts with PLEKHN1. Interacts with SHFL; the interaction increases in presence of RNA. Interacts with YBX1; interaction recruits ELAVL1 on C5-methylcytosine (m5C)-containing mRNAs, thereby promoting mRNA stability. Interacts with FXR1. Post-translationally, phosphorylated by MAPKAPK2. Phosphorylated by PRKCD. In terms of processing, methylated at Arg-217 by CARM1 in T-cells in response to LPS challenge.

The protein localises to the cytoplasm. It is found in the nucleus. It localises to the stress granule. The protein resides in the P-body. Its function is as follows. RNA-binding protein that binds to the 3'-UTR region of mRNAs and increases their stability. Involved in embryonic stem cell (ESC) differentiation: preferentially binds mRNAs that are not methylated by N6-methyladenosine (m6A), stabilizing them, promoting ESC differentiation. Has also been shown to be capable of binding to m6A-containing mRNAs and contributes to MYC stability by binding to m6A-containing MYC mRNAs. Binds to poly-U elements and AU-rich elements (AREs) in the 3'-UTR of target mRNAs. Binds avidly to the AU-rich element in FOS and IL3/interleukin-3 mRNAs. In the case of the FOS AU-rich element, binds to a core element of 27 nucleotides that contain AUUUA, AUUUUA, and AUUUUUA motifs. Binds preferentially to the 5'-UUUU[AG]UUU-3' motif in vitro. With ZNF385A, binds the 3'-UTR of p53/TP53 mRNA to control their nuclear export induced by CDKN2A. Hence, may regulate p53/TP53 expression and mediate in part the CDKN2A anti-proliferative activity. May also bind with ZNF385A the CCNB1 mRNA. Increases the stability of the leptin mRNA harboring an AU-rich element (ARE) in its 3' UTR. In Mus musculus (Mouse), this protein is ELAV-like protein 1 (Elavl1).